The chain runs to 269 residues: MTRFLNYQFNLILLAVSFFTRLPVPTAIDYSPQKLHQAGRYFPLVGWLLAALLSAFYCFMLPYLGREPTVCLLIIFSLMLTGAIHEDGLADTADGFWGGQSITRKLTIMKDSQIGTYGTCALICALLSKFILLSSLAADQHLLLALAIAYPLSRGLAISHVQHLAYARKNSDNSKSDSLAQPMQPRVLLWLLASSVPAVLWLPLSSAILVIVSACVLRFALKHWFKKHIDGYTGDCLGFAQQTQELLIYLLLIITLPKTVNEQTIGFLL.

Helical transmembrane passes span 8–28 (QFNL…PTAI), 41–61 (YFPL…CFML), 70–90 (VCLL…DGLA), 114–136 (IGTY…LSSL), and 196–216 (VPAV…SACV).

Belongs to the CobS family. It depends on Mg(2+) as a cofactor.

It localises to the cell inner membrane. It catalyses the reaction alpha-ribazole + adenosylcob(III)inamide-GDP = adenosylcob(III)alamin + GMP + H(+). The catalysed reaction is alpha-ribazole 5'-phosphate + adenosylcob(III)inamide-GDP = adenosylcob(III)alamin 5'-phosphate + GMP + H(+). It functions in the pathway cofactor biosynthesis; adenosylcobalamin biosynthesis; adenosylcobalamin from cob(II)yrinate a,c-diamide: step 7/7. Its function is as follows. Joins adenosylcobinamide-GDP and alpha-ribazole to generate adenosylcobalamin (Ado-cobalamin). Also synthesizes adenosylcobalamin 5'-phosphate from adenosylcobinamide-GDP and alpha-ribazole 5'-phosphate. This chain is Adenosylcobinamide-GDP ribazoletransferase, found in Pseudoalteromonas atlantica (strain T6c / ATCC BAA-1087).